A 137-amino-acid polypeptide reads, in one-letter code: uncharacterized protein (137 aa).

This is an uncharacterized protein from Frog virus 3 (isolate Goorha) (FV-3).